An 886-amino-acid polypeptide reads, in one-letter code: Protein translocase subunit SecA (886 aa).

Residues Gln-85, 103 to 107 (GEGKT), and Asp-492 each bind ATP. Residues 841 to 864 (RVVENRYAEEGPKQPARRENKVGR) show a composition bias toward basic and acidic residues. Residues 841–866 (RVVENRYAEEGPKQPARRENKVGRND) are disordered. Residues Cys-868, Cys-870, Cys-879, and Cys-880 each coordinate Zn(2+).

This sequence belongs to the SecA family. As to quaternary structure, monomer and homodimer. Part of the essential Sec protein translocation apparatus which comprises SecA, SecYEG and auxiliary proteins SecDF. Other proteins may also be involved. Zn(2+) is required as a cofactor.

Its subcellular location is the cell membrane. The protein localises to the cytoplasm. The enzyme catalyses ATP + H2O + cellular proteinSide 1 = ADP + phosphate + cellular proteinSide 2.. In terms of biological role, part of the Sec protein translocase complex. Interacts with the SecYEG preprotein conducting channel. Has a central role in coupling the hydrolysis of ATP to the transfer of proteins into and across the cell membrane, serving as an ATP-driven molecular motor driving the stepwise translocation of polypeptide chains across the membrane. The chain is Protein translocase subunit SecA from Pelotomaculum thermopropionicum (strain DSM 13744 / JCM 10971 / SI).